A 421-amino-acid chain; its full sequence is Synaptotagmin-12 (421 aa).

The Vesicular segment spans residues 1–18 (MAVDVAEYHLSVIKSPPG). Residues 19 to 39 (WEVGVYAAGALALLGIAAVSL) traverse the membrane as a helical segment. The Cytoplasmic segment spans residues 40-421 (WKLWTSGSFP…VSMWHAVRRN (382 aa)). 3 positions are modified to phosphoserine: serine 97, serine 99, and serine 214. 2 consecutive C2 domains span residues 152 to 272 (TLGQ…SGWL) and 283 to 416 (AVGE…SMWH).

The protein belongs to the synaptotagmin family. As to quaternary structure, homodimer. Can also form heterodimers. Interacts with SYT1. In terms of processing, phosphorylation of Ser-97 is required for mossy-fiber long-term potentiation.

It is found in the cytoplasmic vesicle. The protein resides in the secretory vesicle. The protein localises to the synaptic vesicle membrane. Synaptic vesicle phosphoprotein that enhances spontaneous neurotransmitter release but does not effect induced neurotransmitter release. Unlike other synaptotagmins, it does not bind Ca(2+) or phospholipids. Essential for mossy-fiber long-term potentiation in the hippocampus. This Homo sapiens (Human) protein is Synaptotagmin-12 (SYT12).